Consider the following 255-residue polypeptide: Octanoyltransferase (255 aa).

A BPL/LPL catalytic domain is found at 54–238; the sequence is GDAAELVWLL…AFTEIFGATV (185 aa). Substrate is bound by residues 92–99, 167–169, and 180–182; these read RGGQLTYH, AIG, and GIA. Cys198 functions as the Acyl-thioester intermediate in the catalytic mechanism.

It belongs to the LipB family.

The protein resides in the cytoplasm. It carries out the reaction octanoyl-[ACP] + L-lysyl-[protein] = N(6)-octanoyl-L-lysyl-[protein] + holo-[ACP] + H(+). It functions in the pathway protein modification; protein lipoylation via endogenous pathway; protein N(6)-(lipoyl)lysine from octanoyl-[acyl-carrier-protein]: step 1/2. In terms of biological role, catalyzes the transfer of endogenously produced octanoic acid from octanoyl-acyl-carrier-protein onto the lipoyl domains of lipoate-dependent enzymes. Lipoyl-ACP can also act as a substrate although octanoyl-ACP is likely to be the physiological substrate. The polypeptide is Octanoyltransferase (Rhodopseudomonas palustris (strain HaA2)).